A 625-amino-acid polypeptide reads, in one-letter code: Isocitrate dehydrogenase kinase/phosphatase (625 aa).

ATP contacts are provided by residues 325–331 (APGIKGM) and lysine 346. Aspartate 381 is an active-site residue. Positions 596–625 (RRHSPGRNDHELLTHLPPEPMLTGLSGMTP) are disordered.

Belongs to the AceK family.

Its subcellular location is the cytoplasm. It carries out the reaction L-seryl-[isocitrate dehydrogenase] + ATP = O-phospho-L-seryl-[isocitrate dehydrogenase] + ADP + H(+). In terms of biological role, bifunctional enzyme which can phosphorylate or dephosphorylate isocitrate dehydrogenase (IDH) on a specific serine residue. This is a regulatory mechanism which enables bacteria to bypass the Krebs cycle via the glyoxylate shunt in response to the source of carbon. When bacteria are grown on glucose, IDH is fully active and unphosphorylated, but when grown on acetate or ethanol, the activity of IDH declines drastically concomitant with its phosphorylation. In Polaromonas sp. (strain JS666 / ATCC BAA-500), this protein is Isocitrate dehydrogenase kinase/phosphatase.